The primary structure comprises 209 residues: Large ribosomal subunit protein uL3 (209 aa).

Positions 133–152 are disordered; that stretch reads THGNSLSHRVPGSIGQNQTP. Glutamine 150 is subject to N5-methylglutamine.

This sequence belongs to the universal ribosomal protein uL3 family. Part of the 50S ribosomal subunit. Forms a cluster with proteins L14 and L19. Methylated by PrmB.

In terms of biological role, one of the primary rRNA binding proteins, it binds directly near the 3'-end of the 23S rRNA, where it nucleates assembly of the 50S subunit. In Yersinia enterocolitica serotype O:8 / biotype 1B (strain NCTC 13174 / 8081), this protein is Large ribosomal subunit protein uL3.